The following is a 210-amino-acid chain: Probable GTP-binding protein EngB (210 aa).

The EngB-type G domain occupies 29 to 203 (NGIEIAFAGR…SNKLDSWFAP (175 aa)). Residues 37-44 (GRSNAGKS), 64-68 (GRTQL), 82-85 (DLPG), 149-152 (TKAD), and 181-184 (IYSA) each bind GTP. 2 residues coordinate Mg(2+): serine 44 and threonine 66.

Belongs to the TRAFAC class TrmE-Era-EngA-EngB-Septin-like GTPase superfamily. EngB GTPase family. Mg(2+) serves as cofactor.

In terms of biological role, necessary for normal cell division and for the maintenance of normal septation. In Haemophilus ducreyi (strain 35000HP / ATCC 700724), this protein is Probable GTP-binding protein EngB.